The chain runs to 1382 residues: Hepatocyte growth factor receptor (1382 aa).

Residues 1–24 (MKSPAVLAPGILVFLFTFVQKSDG) form the signal peptide. At 25-933 (ECKEALVKSR…VIVQPDQNFT (909 aa)) the chain is on the extracellular side. The Sema domain maps to 27–516 (KEALVKSRMN…TGKKITKIPL (490 aa)). N-linked (GlcNAc...) asparagine glycosylation occurs at N45. Cystine bridges form between C95–C101, C98–C160, C133–C141, and C173–C176. N106 is a glycosylation site (N-linked (GlcNAc...) asparagine). N149 carries N-linked (GlcNAc...) asparagine glycosylation. Residues N203 and N359 are each glycosylated (N-linked (GlcNAc...) asparagine). 2 disulfides stabilise this stretch: C299–C364 and C386–C398. N400 and N406 each carry an N-linked (GlcNAc...) asparagine glycan. 4 disulfide bridges follow: C521–C539, C527–C562, C530–C546, and C542–C552. IPT/TIG domains are found at residues 564 to 656 (PAIY…FSYV), 658 to 740 (PIIT…FIYR), and 743 to 837 (PIVY…LIYV). O-linked (Man) threonine glycosylation occurs at T583. 2 N-linked (GlcNAc...) asparagine glycosylation sites follow: N608 and N636. O-linked (Man) threonine glycosylation is found at T677 and T762. Residues N786, N880, and N931 are each glycosylated (N-linked (GlcNAc...) asparagine). The helical transmembrane segment at 934–956 (GLIVGVVSISIILLLLLGLFLWL) threads the bilayer. Residues 957–1382 (KKRKQIKDLG…QDNVNGEGDT (426 aa)) lie on the Cytoplasmic side of the membrane. S967 is subject to Phosphoserine. T978 carries the phosphothreonine modification. S991, S998, and S1001 each carry phosphoserine. Y1004 carries the phosphotyrosine modification. The Protein kinase domain maps to 1079–1346 (VHFNEVIGRG…RISAIFSTFI (268 aa)). ATP-binding positions include 1085 to 1093 (IGRGHFGCV) and K1111. The active-site Proton acceptor is the D1205. Positions 1213–1382 (LDEKFTVKVA…QDNVNGEGDT (170 aa)) are interaction with RANBP9. A Phosphotyrosine modification is found at Y1231. Residues Y1235 and Y1236 each carry the phosphotyrosine; by autocatalysis modification. Residue T1290 is modified to Phosphothreonine. Positions 1321-1360 (WHPKAELRPSFSELVSRISAIFSTFIGEHYVHVNATYVNV) are interaction with MUC20. Residues Y1350 and Y1357 each carry the phosphotyrosine; by autocatalysis modification. The residue at position 1366 (Y1366) is a Phosphotyrosine.

The protein belongs to the protein kinase superfamily. Tyr protein kinase family. In terms of assembly, heterodimer made of an alpha chain (50 kDa) and a beta chain (145 kDa) which are disulfide linked. Binds PLXNB1. Interacts when phosphorylated with downstream effectors including STAT3, PIK3R1, SRC, PCLG1, GRB2 and GAB1. Interacts with SPSB1, SPSB2 and SPSB4. Interacts with INPP5D/SHIP1. When phosphorylated at Tyr-1357, interacts with INPPL1/SHIP2. Interacts with RANBP9 and RANBP10, as well as SPSB1, SPSB2, SPSB3 and SPSB4. SPSB1 binding occurs in the presence and in the absence of HGF, however HGF treatment has a positive effect on this interaction. Interacts with MUC20; prevents interaction with GRB2 and suppresses hepatocyte growth factor-induced cell proliferation. Interacts with GRB10. Interacts with PTPN1 and PTPN2. Interacts with HSP90AA1 and HSP90AB1; the interaction suppresses MET kinase activity. Interacts with tensin TNS3. Interacts (when phosphorylated) with tensin TNS4 (via SH2 domain); the interaction increases MET protein stability by inhibiting MET endocytosis and subsequent lysosomal degradation. In terms of processing, autophosphorylated in response to ligand binding on Tyr-1235 and Tyr-1236 in the kinase domain leading to further phosphorylation of Tyr-1350 and Tyr-1357 in the C-terminal multifunctional docking site. Dephosphorylated by PTPRJ at Tyr-1350 and Tyr-1366. Dephosphorylated by PTPN1 and PTPN2. Post-translationally, ubiquitinated. Ubiquitination by CBL regulates the receptor stability and activity through proteasomal degradation. O-mannosylation of IPT/TIG domains by TMEM260 is required for protein maturation. O-mannosylated residues are composed of single mannose glycans that are not elongated or modified.

It is found in the membrane. The enzyme catalyses L-tyrosyl-[protein] + ATP = O-phospho-L-tyrosyl-[protein] + ADP + H(+). In its inactive state, the C-terminal tail interacts with the catalytic domain and inhibits the kinase activity. Upon ligand binding, the C-terminal tail is displaced and becomes phosphorylated, thus increasing the kinase activity. In terms of biological role, receptor tyrosine kinase that transduces signals from the extracellular matrix into the cytoplasm by binding to hepatocyte growth factor/HGF ligand. Regulates many physiological processes including proliferation, scattering, morphogenesis and survival. Ligand binding at the cell surface induces autophosphorylation of MET on its intracellular domain that provides docking sites for downstream signaling molecules. Following activation by ligand, interacts with the PI3-kinase subunit PIK3R1, PLCG1, SRC, GRB2, STAT3 or the adapter GAB1. Recruitment of these downstream effectors by MET leads to the activation of several signaling cascades including the RAS-ERK, PI3 kinase-AKT, or PLCgamma-PKC. The RAS-ERK activation is associated with the morphogenetic effects while PI3K/AKT coordinates prosurvival effects. During embryonic development, MET signaling plays a role in gastrulation, development and migration of muscles and neuronal precursors, angiogenesis and kidney formation. In adults, participates in wound healing as well as organ regeneration and tissue remodeling. Also promotes differentiation and proliferation of hematopoietic cells. This is Hepatocyte growth factor receptor (MET) from Muntiacus muntjak (Barking deer).